The primary structure comprises 218 residues: Eukaryotic translation initiation factor 4E-1 (218 aa).

The tract at residues 1-39 is disordered; sequence MAEETDTRPASAGSRGRPAPEDDDREEGEITDLACAPSP. The span at 21–30 shows a compositional bias: acidic residues; that stretch reads EDDDREEGEI. EIF4G-binding regions lie at residues 43–46 and 53–89; these read HPLE and FDNP…NNIN. Residues 61-66, lysine 93, and 111-112 contribute to the mRNA site; these read KQAAWG and WE. Cysteine 116 and cysteine 154 are oxidised to a cystine. Residues 137–146 form an EIF4G-binding region; it reads HTLLAMIGEQ. MRNA-binding positions include 161-166 and 206-210; these read RGKQER and KKMDK.

The protein belongs to the eukaryotic initiation factor 4E family. As to quaternary structure, EIF4F is a multi-subunit complex, the composition of which varies with external and internal environmental conditions. It is composed of at least EIF4A, EIF4E and EIF4G. EIF4E is also known to interact with other partners. In higher plants two isoforms of EIF4F have been identified, named isoform EIF4F and isoform EIF(iso)4F. Isoform EIF4F has subunits p220 and p26, whereas isoform EIF(iso)4F has subunits p82 and p28. In terms of processing, according to the redox status, the Cys-116-Cys-154 disulfide bridge may have a role in regulating protein function by affecting its ability to bind capped mRNA. Phosphorylated upon oxygen deprivation.

The protein resides in the nucleus. Its subcellular location is the cytoplasm. Functionally, component of the protein complex eIF4F, which is involved in the recognition of the mRNA cap, ATP-dependent unwinding of 5'-terminal secondary structure and recruitment of mRNA to the ribosome. Recognizes and binds the 7-methylguanosine-containing mRNA cap during an early step in the initiation of protein synthesis and facilitates ribosome binding by inducing the unwinding of the mRNAs secondary structures. This chain is Eukaryotic translation initiation factor 4E-1, found in Zea mays (Maize).